The following is a 525-amino-acid chain: 2,3-bisphosphoglycerate-independent phosphoglycerate mutase (525 aa).

Residues Asp-18 and Ser-68 each coordinate Mn(2+). The active-site Phosphoserine intermediate is Ser-68. Substrate is bound by residues His-129, Arg-159–Asp-160, Arg-194, Arg-200, Arg-269–Arg-272, and Lys-345. Residues Asp-413, His-417, Asp-454, His-455, and His-473 each coordinate Mn(2+).

This sequence belongs to the BPG-independent phosphoglycerate mutase family. Monomer. The cofactor is Mn(2+).

It carries out the reaction (2R)-2-phosphoglycerate = (2R)-3-phosphoglycerate. Its pathway is carbohydrate degradation; glycolysis; pyruvate from D-glyceraldehyde 3-phosphate: step 3/5. In terms of biological role, catalyzes the interconversion of 2-phosphoglycerate and 3-phosphoglycerate. The polypeptide is 2,3-bisphosphoglycerate-independent phosphoglycerate mutase (Chromohalobacter salexigens (strain ATCC BAA-138 / DSM 3043 / CIP 106854 / NCIMB 13768 / 1H11)).